A 339-amino-acid polypeptide reads, in one-letter code: Glutamyl-tRNA reductase (339 aa).

Substrate is bound by residues 50–53 (TCHR), Ser102, 107–109 (ETE), and Gln113. Residue Cys51 is the Nucleophile of the active site. 181-186 (GYSDIN) is an NADP(+) binding site.

Belongs to the glutamyl-tRNA reductase family. Homodimer.

It catalyses the reaction (S)-4-amino-5-oxopentanoate + tRNA(Glu) + NADP(+) = L-glutamyl-tRNA(Glu) + NADPH + H(+). Its pathway is porphyrin-containing compound metabolism; protoporphyrin-IX biosynthesis; 5-aminolevulinate from L-glutamyl-tRNA(Glu): step 1/2. Functionally, catalyzes the NADPH-dependent reduction of glutamyl-tRNA(Glu) to glutamate 1-semialdehyde (GSA). The polypeptide is Glutamyl-tRNA reductase (Chlamydia pneumoniae (Chlamydophila pneumoniae)).